A 274-amino-acid chain; its full sequence is Ribonucleoside-diphosphate reductase small chain (274 aa).

3 residues coordinate Fe cation: Asp70, Glu101, and His104. Tyr108 is an active-site residue. Glu163, Glu197, and His200 together coordinate Fe cation.

This sequence belongs to the ribonucleoside diphosphate reductase small chain family. In terms of assembly, heterodimer of a large and a small chain. Fe cation is required as a cofactor.

It catalyses the reaction a 2'-deoxyribonucleoside 5'-diphosphate + [thioredoxin]-disulfide + H2O = a ribonucleoside 5'-diphosphate + [thioredoxin]-dithiol. Functionally, ribonucleoside-diphosphate reductase holoenzyme provides the precursors necessary for viral DNA synthesis. Allows virus growth in non-dividing cells. Catalyzes the biosynthesis of deoxyribonucleotides from the corresponding ribonucleotides. In Sus scrofa (Pig), this protein is Ribonucleoside-diphosphate reductase small chain.